The sequence spans 219 residues: Tritrans,polycis-undecaprenyl-diphosphate synthase (geranylgeranyl-diphosphate specific) (219 aa).

The active site involves Asp-12. Asp-12 contributes to the Mg(2+) binding site. Substrate contacts are provided by residues 13–16 (GNRR), Trp-17, and 59–61 (SRD). The active-site Proton acceptor is Asn-62. Substrate-binding positions include Arg-66, Arg-168, and 174–176 (RLS). Position 187 (Glu-187) interacts with Mg(2+).

The protein belongs to the UPP synthase family. As to quaternary structure, homodimer. Mg(2+) is required as a cofactor.

The enzyme catalyses geranylgeranyl diphosphate + 7 isopentenyl diphosphate = tri-trans,hepta-cis-undecaprenyl diphosphate + 7 diphosphate. In terms of biological role, catalyzes the sequential condensation of isopentenyl diphosphate (IPP) with geranylgeranyl diphosphate (GGPP) to yield (2Z,6Z,10Z,14Z,18Z,22Z,26Z,30E,34E,38E)-undecaprenyl diphosphate (tritrans,heptacis-UPP). It is probably the precursor of glycosyl carrier lipids. The sequence is that of Tritrans,polycis-undecaprenyl-diphosphate synthase (geranylgeranyl-diphosphate specific) from Aeropyrum pernix (strain ATCC 700893 / DSM 11879 / JCM 9820 / NBRC 100138 / K1).